A 351-amino-acid chain; its full sequence is Magnesium-protoporphyrin IX monomethyl ester [oxidative] cyclase 1 (351 aa).

The protein belongs to the AcsF family. The cofactor is Fe cation.

The catalysed reaction is Mg-protoporphyrin IX 13-monomethyl ester + 3 NADPH + 3 O2 + 2 H(+) = 3,8-divinyl protochlorophyllide a + 3 NADP(+) + 5 H2O. It functions in the pathway porphyrin-containing compound metabolism; chlorophyll biosynthesis (light-independent). In terms of biological role, catalyzes the formation of the isocyclic ring in chlorophyll biosynthesis. Mediates the cyclase reaction, which results in the formation of divinylprotochlorophyllide (Pchlide) characteristic of all chlorophylls from magnesium-protoporphyrin IX 13-monomethyl ester (MgPMME). This chain is Magnesium-protoporphyrin IX monomethyl ester [oxidative] cyclase 1, found in Nostoc sp. (strain PCC 7120 / SAG 25.82 / UTEX 2576).